Reading from the N-terminus, the 389-residue chain is Chalcone synthase 1 (389 aa).

Cys164 is a catalytic residue.

The protein belongs to the thiolase-like superfamily. Chalcone/stilbene synthases family.

It carries out the reaction (E)-4-coumaroyl-CoA + 3 malonyl-CoA + 3 H(+) = 2',4,4',6'-tetrahydroxychalcone + 3 CO2 + 4 CoA. It functions in the pathway secondary metabolite biosynthesis; flavonoid biosynthesis. The primary product of this enzyme is 4,2',4',6'-tetrahydroxychalcone (also termed naringenin-chalcone or chalcone) which can under specific conditions spontaneously isomerize into naringenin. The polypeptide is Chalcone synthase 1 (CHS1) (Solanum lycopersicum (Tomato)).